The sequence spans 1161 residues: PAN2-PAN3 deadenylation complex catalytic subunit pan2 (1161 aa).

WD repeat units lie at residues 20-59 (GLPT…RYTS), 102-145 (AHEE…DKLQ), and 276-315 (ANVS…HFNE). The tract at residues 316–452 (MSKEVEFADV…GAKLNGEAED (137 aa)) is linker. A USP domain is found at 453–822 (DPLLKYSNVE…IPCVLAYQAR (370 aa)). Residues 871–1049 (VALDTEFVDL…VEDARMALRL (179 aa)) enclose the Exonuclease domain. Asp-874, Glu-876, Asp-983, and Asp-1042 together coordinate a divalent metal cation. Residues 1094-1161 (GTAVTMQNNS…GDFFGGSPLK (68 aa)) are disordered. Positions 1097–1110 (VTMQNNSGRNTPST) are enriched in polar residues. A compositionally biased stretch (low complexity) spans 1116 to 1129 (AAAAAATTSAPATP). Residues 1145–1155 (TFGGPGTGDFF) are compositionally biased toward gly residues.

It belongs to the peptidase C19 family. PAN2 subfamily. Forms a heterotrimer with an asymmetric homodimer of the regulatory subunit pan3 to form the poly(A)-nuclease (PAN) deadenylation complex. It depends on a divalent metal cation as a cofactor.

It localises to the cytoplasm. The enzyme catalyses Exonucleolytic cleavage of poly(A) to 5'-AMP.. Its activity is regulated as follows. Positively regulated by the regulatory subunit pan3. In terms of biological role, catalytic subunit of the poly(A)-nuclease (PAN) deadenylation complex, one of two cytoplasmic mRNA deadenylases involved in mRNA turnover. PAN specifically shortens poly(A) tails of RNA and the activity is stimulated by poly(A)-binding protein pab1. PAN deadenylation is followed by rapid degradation of the shortened mRNA tails by the CCR4-NOT complex. Deadenylated mRNAs are then degraded by two alternative mechanisms, namely exosome-mediated 3'-5' exonucleolytic degradation, or deadenylation-dependent mRNA decaping and subsequent 5'-3' exonucleolytic degradation by xrn1. May also be involved in post-transcriptional maturation of mRNA poly(A) tails. The polypeptide is PAN2-PAN3 deadenylation complex catalytic subunit pan2 (Aspergillus clavatus (strain ATCC 1007 / CBS 513.65 / DSM 816 / NCTC 3887 / NRRL 1 / QM 1276 / 107)).